A 2340-amino-acid chain; its full sequence is MKNICWLTLKLVKFVVLGCIIWISVAQSTVLSSCLTSCVTNLGRQLDSGTRYNLSEACIHGCQFWNSVDQETCALKCNDTYATICERESCEVGCSNAEGSYEEEVLESTELPTAPFASSIGSHGVTLRWNPANISGVKYIIQWKYAQLPGSWTFTETVSKLSYTVEPLHPFTEYIFRVVWIFTAQLHLYSPPSPSYRTHPYGVPETAPLILNMESWSPDTVEVSWAPPHFPGGPILGYNLRLISKNQKLDSGTQRTSFQFYSTLPNTTYRFSIAAVNEVGEGPEAESTVTTPSPSVQEEEQWLFLSRKTSLRKRSLKYLVDEAHCLWSDAIHHNITGISVYAQQQVVYFSEGTVIWMKGAANMSDVSDLRIFYQGSGLVSSISIDWLYQRMYFIMDKLVYVCELKNCSNLEEITPFSLIAPQKVVVDSYNGYLFYLLRDGIYRVNLPLPSGRDTKAVRIVESGTLKDFAVKPQSKRIIYFNDTMQLFMSTFLDGSAFHRVLPWVPLVTVKSFACENNDFLITDGKAIFQQDSLSFNEFIVGCDLSHIEEFGFGNLVIFGSSVQSYPLPGHPQEVSVLFGSREALIQWTPPALAIGASPSAWQNWTYEVKVYSQDILEITQVFSNISGTMLNVPELQSSTKYTVSVRASSPKGPGPWSAPSVGTTLVPATEPPFIMAVKEDGLWSKPLCSFGPGEFLSSDVGNVSDMDWYNNSLYYSDTKGNVYVRPLNGMDISENYHIPSIVGAGALAFEWLGHFLYWAGKTYVIQRQSVLTGHTDIVTHVKLLVNDMAVDSVGGYLYWTTLYSVESTRLNGESSLVLQAQPWLSGKKVIALTLDLSDGLLYWLVQDNQCIHLYTAVLRGWSGGDATITEFAAWSTSEISQNALMYYSGRLFWINGFRIITAQEIGQRTSVSVSEPAKFNQFTIIQTSLKPLPGNFSSTPKVIPDPVQESSFRIEGHTSSFQILWNEPPAVDWGIVFYSVEFSTHSKFLIIEQQSLPIFTVEGLEPYTLFNLSVTPYTYWGKGQKTSLSFRAPESVPSAPENPRIFILSSGRYTKKNEVVVEFRWNKPKHENGVLTKFEIFYHISKQSGTNRSTEDWMSASVIPPVMSFQLEAVSPEYTVAFQVRVFTSKGPGPFSDIVMSKTSEIKPCPYLISLLGNKIVFLDMDQNQVLWTFSLEGDVSTVGYTTDDEMGYFAQGDTLFLLNLRNHSSSKLFQDALVSDIRVIAVDWIARHLYFALKASQNGTQIFNVDLEHKVKSPREVKTCKAHTTIISFSIYPLLSRLYWTEVSDLGHQMFYCNISNHTSQHVLQPKASNQHGRSQCSCNVTESELSGAMTVDTSDPDRPWIYFTKRQEIWAMDLEGCQCWKVIMVPTIPGKRIISLTVDGEFIYWIMKTKDDAQIYQAKKGSGAILSQVKASRSKHILAYSSALQPFPDKAYLSLASDMVEATILYATNTSLTLKLPPVKTNLTWHGITHPTSTYLIYYMEANRANSSDRRHKMLESQENVARIEGLQPFSMYMIQIAVKNYYSEPLEHLPLGKEIQGQTKSGVPGAVCHINATVLSDTSLHVFWTESHKPNGPKESVRYQLVMSYLAPIPETPLRQGEFPSAKLSLLITKLSGGQLYVMKVLACHPEEMWCTESHPVSVNMFDTPEKPSALVPENTSLQLDWKARSNVNLTGFWFELQKWKYNEFYHVKASCSQGPVYVCNITDLQPYTSYNIRVVVVYTTGENSSSIPESFKTKAGVPSKPGIPKLLEGSKNSIQWEKAEDNGSRLMYYTLEVRKGISNDSQNQSSRWKVVFNGSCSSICTWRSKNLKGTFQFRAVAANEIGLGEYSEISEDITLVEDGVWITETSFILTIIVGIFLVATVPLTFVWHRSLKSHKASKEGLSVLNDNDKELAELRGLAAGVGLANACYAVHTVPTQEEIENLPAFPREKLSLRLLLGSGAFGEVYEGTAIDILGVGSGEIKVAVKTLKKGSTDQEKIEFLKEAHLMSKFNHPNILKQLGVCLLGEPQYIILELMEGGDLLSYLRKARGTTFHGPSLTLLDLVELCVDISKGCVYLEQMHFIHRDLAARNCLVSVKDYTSPRVVKIGDFGLAREIYKNDYYRKRGEGLLPVRWMAPENLMDGIFTSQSDVWSFGILVWEILTLGHQPYPAHSNLDVLNYVQAGGRLEPPRNCPDDLWNLMSQCWAQEPDQRPTFHNIQNQLQLFRNVFLNNVSHCGEAAPTGGVINKGFEGEDDEMVTLNSDDTMPVALMETKNQEGLNYMVLATKCSQGEGSYEGPLGPKELGSCDLKKDKKQPQADKDFCQEPQVAYGSPGLSEGLNYACLAHSEHGDVSE.

Positions 1–28 (MKNICWLTLKLVKFVVLGCIIWISVAQS) are cleaved as a signal peptide. Residues 29-1854 (TVLSSCLTSC…EDGVWITETS (1826 aa)) lie on the Extracellular side of the membrane. A glycan (N-linked (GlcNAc...) asparagine) is linked at Asn53. 2 Fibronectin type-III domains span residues 111-206 (LPTA…VPET) and 207-295 (APLI…PSPS). 2 N-linked (GlcNAc...) asparagine glycosylation sites follow: Asn334 and Asn362. One can recognise a Fibronectin type-III 3 domain in the interval 567–667 (LPGHPQEVSV…APSVGTTLVP (101 aa)). N-linked (GlcNAc...) asparagine glycans are attached at residues Asn935 and Asn1011. Fibronectin type-III domains lie at 943–1038 (IPDP…SVPS) and 1039–1146 (APEN…TSEI). Asn1243 carries N-linked (GlcNAc...) asparagine glycosylation. Fibronectin type-III domains lie at 1442-1549 (ASDM…TKSG), 1550-1649 (VPGA…VNMF), 1651-1744 (TPEK…TKAG), and 1745-1846 (VPSK…LVED). Asn1676 carries N-linked (GlcNAc...) asparagine glycosylation. The chain crosses the membrane as a helical span at residues 1855 to 1875 (FILTIIVGIFLVATVPLTFVW). The Cytoplasmic portion of the chain corresponds to 1876–2340 (HRSLKSHKAS…AHSEHGDVSE (465 aa)). In terms of domain architecture, Protein kinase spans 1938-2216 (LSLRLLLGSG…QLQLFRNVFL (279 aa)). ATP contacts are provided by residues 1944–1952 (LGSGAFGEV) and Lys1973. Asp2072 (proton acceptor) is an active-site residue. Phosphotyrosine; by autocatalysis occurs at positions 2267 and 2327.

The protein belongs to the protein kinase superfamily. Tyr protein kinase family. Insulin receptor subfamily. As to quaternary structure, interacts with PTPN11; may activate the PI3 kinase-mTOR signaling pathway. Interacts with VAV3; constitutive interaction mediating VAV3 phosphorylation. Interacts with PTPN6 (via SH2 1 domain); the interaction is direct and promotes ROS1 dephosphorylation. Post-translationally, phosphorylated. Probably autophosphorylates. Phosphorylation at Tyr-2267 and/or Tyr-2327 recruits PTPN11. Phosphorylation at Tyr-2267 is required for the interaction with PTPN6 that mediates ROS1 dephosphorylation. Phosphorylation at Tyr-2267 stimulates the kinase activity and the activation of the ERK1 signaling cascade. Expressed by epithelial cells of the caput epididymis (at protein level).

It localises to the cell membrane. The catalysed reaction is L-tyrosyl-[protein] + ATP = O-phospho-L-tyrosyl-[protein] + ADP + H(+). Inhibited by dephosphorylation by PTPN6. Functionally, receptor tyrosine kinase (RTK) that plays a role in epithelial cell differentiation and regionalization of the proximal epididymal epithelium. NELL2 is an endogenous ligand for ROS1. Upon endogenous stimulation by NELL2, ROS1 activates the intracellular signaling pathway and triggers epididymal epithelial differentiation and subsequent sperm maturation. May activate several downstream signaling pathways related to cell differentiation, proliferation, growth and survival including the PI3 kinase-mTOR signaling pathway. Mediates the phosphorylation of PTPN11, an activator of this pathway. May also phosphorylate and activate the transcription factor STAT3 to control anchorage-independent cell growth. Mediates the phosphorylation and the activation of VAV3, a guanine nucleotide exchange factor regulating cell morphology. May activate other downstream signaling proteins including AKT1, MAPK1, MAPK3, IRS1, and PLCG2. In Mus musculus (Mouse), this protein is Proto-oncogene tyrosine-protein kinase ROS (Ros1).